The sequence spans 797 residues: Cleavage factor two protein 2 (797 aa).

Disordered regions lie at residues 519–557 (ENDSDDNALSNSNGKRKWSEINDGLQQKKEEEDEDEVPS) and 677–703 (PSEEEDKKEEVEKKDGDKERNEEKKEE). Over residues 684–703 (KEEVEKKDGDKERNEEKKEE) the composition is skewed to basic and acidic residues.

As to quaternary structure, component of the cleavage and polyadenylation factor (CPF) complex, which is composed of cft1, cft2, ysh1, pta1, swd2, pfs2, dis2, yth1, ssu72, and fip1.

Its subcellular location is the nucleus. RNA-binding component of the cleavage and polyadenylation factor (CPF) complex, which plays a key role in polyadenylation-dependent pre-mRNA 3'-end formation and cooperates with cleavage factors including the CFIA complex and NAB4/CFIB. May be involved in poly(A)-site recognition. May be involved in the association of the CPF, CPFIA and RNA polymerase II complexes. The sequence is that of Cleavage factor two protein 2 (cft2) from Schizosaccharomyces pombe (strain 972 / ATCC 24843) (Fission yeast).